The chain runs to 340 residues: Major histocompatibility complex class I-related protein 1 (340 aa).

An N-terminal signal peptide occupies residues 1–22 (MGELTAFLLPLIIVLMVKHSNS). The tract at residues 23-109 (RTHSLRYFRL…KRLQRHYNHS (87 aa)) is alpha-1. The segment at 23 to 201 (RTHSLRYFRL…EYGKDTLQRT (179 aa)) is antigen-binding cleft. Residues 23–302 (RTHSLRYFRL…QESEAIPLVM (280 aa)) lie on the Extracellular side of the membrane. 2 residues coordinate 8-(9H-purin-6-yl)-2-oxa-8-azabicyclo[3.3.1]nona-3,6-diene-4,6-dicarbaldehyde: tyrosine 29 and arginine 31. 3 residues coordinate 5-(2-oxoethylideneamino)-6-(D-ribitylamino)uracil: arginine 31, serine 46, and lysine 65. The 5-(2-oxopropylideneamino)-6-(D-ribitylamino)uracil site is built by arginine 31, serine 46, and lysine 65. Positions 31, 46, and 65 each coordinate 7-hydroxy-6-methyl-8-(1-D-ribityl)lumazine. Residues lysine 65 and histidine 80 each contribute to the 8-(9H-purin-6-yl)-2-oxa-8-azabicyclo[3.3.1]nona-3,6-diene-4,6-dicarbaldehyde site. Lysine 65 is a binding site for 2-amino-4-oxopteridine-6-carbaldehyde. Pyridoxal is bound at residue lysine 65. Asparagine 107 is a glycosylation site (N-linked (GlcNAc...) asparagine). An alpha-2 region spans residues 110-201 (GSHTYQRMIG…EYGKDTLQRT (92 aa)). Arginine 116 contacts 8-(9H-purin-6-yl)-2-oxa-8-azabicyclo[3.3.1]nona-3,6-diene-4,6-dicarbaldehyde. 3 residues coordinate 5-(2-oxoethylideneamino)-6-(D-ribitylamino)uracil: arginine 116, tyrosine 174, and glutamine 175. 5-(2-oxopropylideneamino)-6-(D-ribitylamino)uracil-binding residues include arginine 116, tyrosine 174, and glutamine 175. Residues arginine 116, tyrosine 174, and glutamine 175 each coordinate 7-hydroxy-6-methyl-8-(1-D-ribityl)lumazine. 2 disulfides stabilise this stretch: cysteine 120–cysteine 183 and cysteine 222–cysteine 278. The segment at 202–293 (EPPLVRVNRK…GVHVVLQVPQ (92 aa)) is alpha-3. Residues 203–282 (PPLVRVNRKE…SNLYSCHVEH (80 aa)) form the Ig-like C1-type domain. The tract at residues 294-302 (ESEAIPLVM) is connecting peptide. Residues 303-323 (KAVSGSIVFVIVLAGVGVLVW) traverse the membrane as a helical segment. The Cytoplasmic segment spans residues 324–340 (RRRPREQNGAVYLPTPD).

Belongs to the MHC class I family. Heterotrimer that consists of MR1, B2M and metabolite antigen. Major classes of metabolite ligands presented by MR1 include riboflavin-related antigens, pyrimidines and ribityl lumazines, nucleobase adducts and folate derivatives. Forms reversible covalent Schiff base complexes with microbial pyrimidine-based metabolite, which serves as a molecular switch triggering complete folding, stable association with B2M and translocation of the ternary complex from endoplasmic reticulum to the plasma membrane. Alternatively, forms non-Schiff base complexes with ribityl lumazines. On antigen-presenting cells, the ternary complex interacts with TCR on MR1-restricted T cells. Interacts with TAPBP and TAPBPL chaperones in the endoplasmic reticulum. TAPBP associated or not with MHC class I peptide loading complex binds ligand-free MR1 or MR1-B2M complex, providing for stable MR1 pools ready for metabolite antigen processing. TAPBPL interacts with MR1 in a ligand-independent way; this interaction may stabilize MR1 pool and facilitate ligand loading and dissociation. Structurally, MR1-B2M heterodimer adopts a topology similar to classical MHC class I molecules, with alpha-1 and alpha-2 domains of MR1 forming the antigen-binding cleft composed of two alpha-helices resting on a floor of 7-stranded anti-parallel beta-pleated sheet. MR1-B2M heterodimer (via alpha-helices) interacts with TCR (via CDR domains). Post-translationally, N-glycosylated.

The protein localises to the cell membrane. It localises to the endoplasmic reticulum membrane. The protein resides in the golgi apparatus membrane. It is found in the early endosome membrane. Its subcellular location is the late endosome membrane. In terms of biological role, antigen-presenting molecule specialized in displaying microbial pyrimidine-based metabolites to alpha-beta T cell receptors (TCR) on innate-type mucosal-associated invariant T (MAIT) cells. In complex with B2M preferentially presents riboflavin-derived metabolites to semi-invariant TCRs on MAIT cells, guiding immune surveillance of the microbial metabolome at mucosal epithelial barriers. Signature pyrimidine-based microbial antigens are generated via non-enzymatic condensation of metabolite intermediates of the riboflavin pathway with by-products arising from other metabolic pathways such as glycolysis. Typical potent antigenic metabolites are 5-(2-oxoethylideneamino)-6-D-ribitylaminouracil (5-OE-RU) and 5-(2-oxopropylideneamino)-6-D-ribitylaminouracil (5-OP-RU), products of condensation of 5-amino-6-D-ribityaminouracil (5-A-RU) with glyoxal or methylglyoxal by-products, respectively. May present microbial antigens to various MAIT cell subsets, providing for unique recognition of diverse microbes, including pathogens that do not synthesize riboflavin. Upon antigen recognition, elicits rapid innate-type MAIT cell activation to eliminate pathogenic microbes by directly killing infected cells. During T cell development, drives thymic selection and post-thymic terminal differentiation of MAIT cells in a process dependent on commensal microflora. Acts as an immune sensor of cancer cell metabolome. May present a tumor-specific or -associated metabolite essential for cancer cell survival to a pan-cancer TCR on a non-MAIT CD8-positive T cell clone, triggering T cell-mediated killing of a wide range of cancer cell types. May present tumor-enriched pyridoxal and pyridoxal 5'-phosphate antigens, enabling preferential recognition of cancer cells. Presents nucleobase carbonyl adducts generated during oxidative stress. Captures M3Ade, a nucleobase adduct composed of one adenine modified by a malondialdehyde trimer, for recognition by MR1-restricted T cell clones expressing a polyclonal TCR repertoire. The chain is Major histocompatibility complex class I-related protein 1 from Pongo abelii (Sumatran orangutan).